The primary structure comprises 61 residues: Large ribosomal subunit protein uL30 (61 aa).

This sequence belongs to the universal ribosomal protein uL30 family. Part of the 50S ribosomal subunit.

The sequence is that of Large ribosomal subunit protein uL30 from Rubrobacter xylanophilus (strain DSM 9941 / JCM 11954 / NBRC 16129 / PRD-1).